The sequence spans 1210 residues: Histone-lysine N-methyltransferase EHMT2 (1210 aa).

Residues 1–23 (MAAAAGAAAAAAAEGEAPAEMGA) are compositionally biased toward low complexity. 2 disordered regions span residues 1 to 262 (MAAA…LEEW) and 280 to 386 (DERV…EYME). A2 is subject to N-acetylalanine. Over residues 26–38 (LEKETRGATERVH) the composition is skewed to basic and acidic residues. S40 is modified (phosphoserine). T44 is modified (phosphothreonine). Position 47 is a phosphoserine (S47). Over residues 105 to 128 (GRILLGHATKSFPSSPSKGGSCPS) the composition is skewed to low complexity. A Phosphoserine modification is found at S140. Positions 155–165 (PGAQGAAAAGS) are enriched in low complexity. The residue at position 173 (S173) is a Phosphoserine. K185 carries the post-translational modification N6,N6,N6-trimethyllysine; by EHMT2; alternate. K185 carries the N6,N6-dimethyllysine; by EHMT2; alternate modification. Residues 198–216 (PEKRPPEIQHFRMSDDVHS) are compositionally biased toward basic and acidic residues. Glycyl lysine isopeptide (Lys-Gly) (interchain with G-Cter in SUMO2) cross-links involve residues K219 and K229. S232, S242, and S246 each carry phosphoserine. Basic and acidic residues predominate over residues 280-291 (DERVDSDSKSEV). The segment covering 298-327 (LSEEEEEEEEEEEEEEEEEEEEEEEEDEES) has biased composition (acidic residues). The segment covering 338 to 347 (GRRKAKKKWR) has biased composition (basic residues). Phosphoserine occurs at positions 350, 412, and 413. The interval 548–608 (IPRGDGVTPP…LADTIDSSGP (61 aa)) is disordered. T555 carries the phosphothreonine modification. S569 carries the phosphoserine modification. K634 participates in a covalent cross-link: Glycyl lysine isopeptide (Lys-Gly) (interchain with G-Cter in SUMO2). ANK repeat units follow at residues 649–678 (FHPR…DPNF), 684–713 (SKRT…NINA), 717–746 (QQRT…CVYS), 750–780 (DGST…DVNA), 784–813 (GGWT…DVTL), 817–846 (EENI…DLHA), and 850–879 (HGDT…NPEL). A histone H3K9me binding region spans residues 817-819 (EEN). Residues 972-1035 (QHCTCVDDCS…NCKNRVVQSG (64 aa)) enclose the Pre-SET domain. 9 residues coordinate Zn(2+): C974, C976, C980, C985, C987, C1017, C1021, C1023, and C1027. The 118-residue stretch at 1038–1155 (VRLQLYRTAK…TGEELGFDYG (118 aa)) folds into the SET domain. Residues 1048 to 1050 (MGW), Y1085, and 1112 to 1113 (NH) each bind S-adenosyl-L-methionine. The interaction with histone H3 stretch occupies residues 1074–1093 (DAEADVREDDSYLFDLDNKD). Residue C1115 participates in Zn(2+) binding. The segment at 1154 to 1157 (YGDR) is interaction with histone H3. The Post-SET domain maps to 1164 to 1180 (KYFTCQCGSEKCKHSAE). Residue C1168 coordinates Zn(2+). Q1169 is an S-adenosyl-L-methionine binding site. The Zn(2+) site is built by C1170 and C1175. S1204 is subject to Phosphoserine. T1210 carries the phosphothreonine modification.

The protein belongs to the class V-like SAM-binding methyltransferase superfamily. Histone-lysine methyltransferase family. Suvar3-9 subfamily. As to quaternary structure, heterodimer; heterodimerizes with EHMT1/GLP. Interacts with GFI1B and WIZ. Part of the E2F6.com-1 complex in G0 phase composed of E2F6, MGA, MAX, TFDP1, CBX3, BAT8, EHMT1, RING1, RNF2, MBLR, L3MBTL2 and YAF2. Part of a complex composed of TRIM28, HDAC1, HDAC2 and EHMT2. Interacts with UHRF1. Interacts with CDYL. Interacts with REST only in the presence of CDYL. Part of a complex containing at least CDYL, REST, WIZ, SETB1, EHMT1 and EHMT2. Interacts with PRDM9 and CDYL; interaction only takes place when PRDM9 is bound to hotspot DNA. Interacts with SMYD5. In terms of processing, methylated at Lys-185; automethylated. Expressed in all tissues examined, with high levels in fetal liver, thymus, lymph node, spleen and peripheral blood leukocytes and lower level in bone marrow.

The protein localises to the nucleus. The protein resides in the chromosome. The catalysed reaction is N(6)-methyl-L-lysyl(9)-[histone H3] + S-adenosyl-L-methionine = N(6),N(6)-dimethyl-L-lysyl(9)-[histone H3] + S-adenosyl-L-homocysteine + H(+). The enzyme catalyses L-lysyl(9)-[histone H3] + S-adenosyl-L-methionine = N(6)-methyl-L-lysyl(9)-[histone H3] + S-adenosyl-L-homocysteine + H(+). Its function is as follows. Histone methyltransferase that specifically mono- and dimethylates 'Lys-9' of histone H3 (H3K9me1 and H3K9me2, respectively) in euchromatin. H3K9me represents a specific tag for epigenetic transcriptional repression by recruiting HP1 proteins to methylated histones. Also mediates monomethylation of 'Lys-56' of histone H3 (H3K56me1) in G1 phase, leading to promote interaction between histone H3 and PCNA and regulating DNA replication. Also weakly methylates 'Lys-27' of histone H3 (H3K27me). Also required for DNA methylation, the histone methyltransferase activity is not required for DNA methylation, suggesting that these 2 activities function independently. Probably targeted to histone H3 by different DNA-binding proteins like E2F6, MGA, MAX and/or DP1. May also methylate histone H1. In addition to the histone methyltransferase activity, also methylates non-histone proteins: mediates dimethylation of 'Lys-373' of p53/TP53. Also methylates CDYL, WIZ, ACIN1, DNMT1, HDAC1, ERCC6, KLF12 and itself. The polypeptide is Histone-lysine N-methyltransferase EHMT2 (EHMT2) (Homo sapiens (Human)).